We begin with the raw amino-acid sequence, 706 residues long: DNA ligase (706 aa).

NAD(+) is bound by residues 40–44 (DLQYD), 89–90 (SI), and glutamate 120. Lysine 122 serves as the catalytic N6-AMP-lysine intermediate. NAD(+)-binding residues include arginine 143, glutamate 190, lysine 306, and lysine 330. Positions 424, 427, 442, and 447 each coordinate Zn(2+). Residues 625–706 (EANLPLAGKN…FRLRYETEAT (82 aa)) form the BRCT domain.

The protein belongs to the NAD-dependent DNA ligase family. LigA subfamily. It depends on Mg(2+) as a cofactor. The cofactor is Mn(2+).

The enzyme catalyses NAD(+) + (deoxyribonucleotide)n-3'-hydroxyl + 5'-phospho-(deoxyribonucleotide)m = (deoxyribonucleotide)n+m + AMP + beta-nicotinamide D-nucleotide.. DNA ligase that catalyzes the formation of phosphodiester linkages between 5'-phosphoryl and 3'-hydroxyl groups in double-stranded DNA using NAD as a coenzyme and as the energy source for the reaction. It is essential for DNA replication and repair of damaged DNA. This is DNA ligase from Rhodopirellula baltica (strain DSM 10527 / NCIMB 13988 / SH1).